The primary structure comprises 157 residues: Protein NrdI (157 aa).

It belongs to the NrdI family.

Its function is as follows. Probably involved in ribonucleotide reductase function. In Mycoplasma mycoides subsp. mycoides SC (strain CCUG 32753 / NCTC 10114 / PG1), this protein is Protein NrdI.